A 389-amino-acid chain; its full sequence is 23S rRNA (uracil(747)-C(5))-methyltransferase RlmC (389 aa).

Cysteine 12, cysteine 20, cysteine 23, and cysteine 99 together coordinate [4Fe-4S] cluster. Residues glutamine 224, phenylalanine 253, glutamate 274, and asparagine 321 each contribute to the S-adenosyl-L-methionine site. Cysteine 348 (nucleophile) is an active-site residue.

Belongs to the class I-like SAM-binding methyltransferase superfamily. RNA M5U methyltransferase family. RlmC subfamily.

The catalysed reaction is uridine(747) in 23S rRNA + S-adenosyl-L-methionine = 5-methyluridine(747) in 23S rRNA + S-adenosyl-L-homocysteine + H(+). Catalyzes the formation of 5-methyl-uridine at position 747 (m5U747) in 23S rRNA. This Shewanella putrefaciens (strain CN-32 / ATCC BAA-453) protein is 23S rRNA (uracil(747)-C(5))-methyltransferase RlmC.